Reading from the N-terminus, the 330-residue chain is Adenylate isopentenyltransferase 5, chloroplastic (330 aa).

The N-terminal 39 residues, 1–39, are a transit peptide targeting the chloroplast; the sequence is MKPCMTALRQVIQPLSLNFQGNMVDVPFFRRKDKVVFVM. 40 to 47 lines the ATP pocket; that stretch reads GATGTGKS.

The protein belongs to the IPP transferase family. Expressed in root primordia, columella root caps, upper part of young inflorescences, and fruit abscission zones.

It localises to the plastid. It is found in the chloroplast. The enzyme catalyses dimethylallyl diphosphate + ADP = N(6)-(dimethylallyl)adenosine 5'-diphosphate + diphosphate. The catalysed reaction is dimethylallyl diphosphate + ATP = N(6)-(dimethylallyl)adenosine 5'-triphosphate + diphosphate. Functionally, involved in cytokinin biosynthesis. Catalyzes the transfer of an isopentenyl group from dimethylallyl diphosphate (DMAPP) to ATP and ADP. The polypeptide is Adenylate isopentenyltransferase 5, chloroplastic (IPT5) (Arabidopsis thaliana (Mouse-ear cress)).